The sequence spans 267 residues: Small ribosomal subunit protein uS3 (267 aa).

In terms of domain architecture, KH type-2 spans Ile43 to Lys111. Residues Phe216–Glu267 form a disordered region. Positions Gln228–Gln240 are enriched in basic residues. Over residues Arg241–Glu267 the composition is skewed to low complexity.

Belongs to the universal ribosomal protein uS3 family. Part of the 30S ribosomal subunit. Forms a tight complex with proteins S10 and S14.

Its function is as follows. Binds the lower part of the 30S subunit head. Binds mRNA in the 70S ribosome, positioning it for translation. The polypeptide is Small ribosomal subunit protein uS3 (Bifidobacterium adolescentis (strain ATCC 15703 / DSM 20083 / NCTC 11814 / E194a)).